A 766-amino-acid polypeptide reads, in one-letter code: Single-minded homolog 1 (766 aa).

The bHLH domain occupies 1–53 (MKEKSKNAARTRREKENSEFYELAKLLPLPSAITSQLDKASIIRLTTSYLKMR). PAS domains follow at residues 77 to 147 (GREL…QPYH) and 218 to 288 (PPSA…LVKG). Positions 292–335 (TKYYRFLAKHGGWVWVQSYATIVHNSRSSRPHCIVSVNYVLTDT) constitute a PAC domain. The region spanning 336-766 (EYKGLQLSLD…GTSVIITNGS (431 aa)) is the Single-minded C-terminal domain. Polar residues predominate over residues 353–365 (AFSYTSSSTPTMT). Disordered regions lie at residues 353–431 (AFSY…SQHD), 528–563 (WDED…EPSK), and 642–662 (SPRE…SSPN). The Nuclear localization signal motif lies at 368 to 387 (RKGAKSRLSSSKSKSRTSPY). Over residues 373-385 (SRLSSSKSKSRTS) the composition is skewed to low complexity. Positions 394 to 404 (HTERSESDHDS) are enriched in basic and acidic residues. Over residues 649–662 (DNSPTALSRISSPN) the composition is skewed to polar residues.

Efficient DNA binding requires dimerization with another bHLH protein. Heterodimer; forms a heterodimer with ARNT, ARNT2.

Its subcellular location is the nucleus. Functionally, transcriptional factor that may have pleiotropic effects during embryogenesis and in the adult. The polypeptide is Single-minded homolog 1 (SIM1) (Pan troglodytes (Chimpanzee)).